The primary structure comprises 253 residues: 5'-nucleotidase SurE (253 aa).

4 residues coordinate a divalent metal cation: Asp8, Asp9, Ser39, and Asn91.

It belongs to the SurE nucleotidase family. The cofactor is a divalent metal cation.

It localises to the cytoplasm. It catalyses the reaction a ribonucleoside 5'-phosphate + H2O = a ribonucleoside + phosphate. Functionally, nucleotidase that shows phosphatase activity on nucleoside 5'-monophosphates. In Albidiferax ferrireducens (strain ATCC BAA-621 / DSM 15236 / T118) (Rhodoferax ferrireducens), this protein is 5'-nucleotidase SurE.